The following is a 494-amino-acid chain: UPF0164 protein TP_0859/TP_0860 (494 aa).

The signal sequence occupies residues 1–44 (MVRRPCVSAAPVRVGGRLVFGFARVGSRGLCLGALLLSPRIVLA).

Belongs to the UPF0164 family.

The polypeptide is UPF0164 protein TP_0859/TP_0860 (Treponema pallidum (strain Nichols)).